The sequence spans 516 residues: TBC1 domain family member 22A (516 aa).

The residue at position 2 (Ala2) is an N-acetylalanine. 2 disordered regions span residues Glu63–Ser88 and Leu102–Asp186. The span at Gln107–Thr116 shows a compositional bias: polar residues. A compositionally biased stretch (pro residues) spans Glu122–Pro133. Polar residues predominate over residues Val143–Ser179. A phosphoserine mark is found at Ser144 and Ser166. Residues Gly221–Pro445 form the Rab-GAP TBC domain.

In terms of assembly, homodimer. Interacts with ACBD3 and ARFGEF1. Interacts with YWHAB, YWHAE, YWHAG, YWHAH, YWHAQ and YWHAZ.

May act as a GTPase-activating protein for Rab family protein(s). The sequence is that of TBC1 domain family member 22A (Tbc1d22a) from Mus musculus (Mouse).